The chain runs to 273 residues: HTH-type transcriptional activator RhaS (273 aa).

The 99-residue stretch at 174 to 272 (YQLLDWLQNN…SQSPRDLRSQ (99 aa)) folds into the HTH araC/xylS-type domain. DNA-binding regions (H-T-H motif) lie at residues 191-212 (PELA…KNKT) and 239-262 (VTDI…KREF).

Binds DNA as a dimer.

Its subcellular location is the cytoplasm. Functionally, activates expression of the rhaBAD and rhaT operons. The protein is HTH-type transcriptional activator RhaS of Yersinia pestis bv. Antiqua (strain Antiqua).